A 262-amino-acid polypeptide reads, in one-letter code: MEDILLVIDIGNTNIVLGIFKDDELIFEWRISTDLHKTSDEYALTLRQALEYSNVKKSDVKEAIIGSVVPNLMPTIPKAVKKYLGIEPLIVDEKIKTGIVNKYASPKEVGVDRIINAVSACKKYSTPVIIVDIGTAITFDYITENKEYLGGAIAPGIAISSEALFMKTAKLPKIEIEMPDSVIGDSTVKSMQSGVVFGFIGLIDYIIEKILEEKDKTKDEVTIIATGGFSYLIAKQSKYITIIDKLITLDGLKIINDLNKND.

9 to 16 serves as a coordination point for ATP; that stretch reads DIGNTNIV. Residues Y103 and 110–113 each bind substrate; that span reads GVDR. D112 functions as the Proton acceptor in the catalytic mechanism. D132 serves as a coordination point for K(+). T135 provides a ligand contact to ATP. T187 contacts substrate.

The protein belongs to the type III pantothenate kinase family. In terms of assembly, homodimer. NH4(+) serves as cofactor. It depends on K(+) as a cofactor.

It localises to the cytoplasm. It carries out the reaction (R)-pantothenate + ATP = (R)-4'-phosphopantothenate + ADP + H(+). It functions in the pathway cofactor biosynthesis; coenzyme A biosynthesis; CoA from (R)-pantothenate: step 1/5. Catalyzes the phosphorylation of pantothenate (Pan), the first step in CoA biosynthesis. This chain is Type III pantothenate kinase, found in Finegoldia magna (strain ATCC 29328 / DSM 20472 / WAL 2508) (Peptostreptococcus magnus).